The sequence spans 58 residues: Transactivator protein ORF121 (58 aa).

Stimulates the expression of 39k gene most probably by increasing IE1 expression. This chain is Transactivator protein ORF121 (AC121), found in Lepidoptera (butterflies and moths).